We begin with the raw amino-acid sequence, 275 residues long: Pyridoxal phosphate homeostasis protein (275 aa).

Ser-6 carries the post-translational modification Phosphoserine. Lys-47 bears the N6-(pyridoxal phosphate)lysine mark. Tyr-69 bears the Phosphotyrosine mark. The residue at position 125 (Lys-125) is an N6-succinyllysine. 2 positions are modified to phosphoserine: Ser-226 and Ser-244.

The protein belongs to the pyridoxal phosphate-binding protein YggS/PROSC family.

Its function is as follows. Pyridoxal 5'-phosphate (PLP)-binding protein, which may be involved in intracellular homeostatic regulation of pyridoxal 5'-phosphate (PLP), the active form of vitamin B6. This chain is Pyridoxal phosphate homeostasis protein, found in Pongo abelii (Sumatran orangutan).